The chain runs to 471 residues: Siroheme synthase (471 aa).

Residues 1–203 (MDYLPLFADI…GDWESAEKTL (203 aa)) form a precorrin-2 dehydrogenase /sirohydrochlorin ferrochelatase region. NAD(+)-binding positions include 22-23 (EV) and 43-44 (KN). Ser128 is modified (phosphoserine). The uroporphyrinogen-III C-methyltransferase stretch occupies residues 215–471 (GEIILVGAGP…DTKSSLINLA (257 aa)). Pro224 is an S-adenosyl-L-methionine binding site. The active-site Proton acceptor is Asp247. Lys269 acts as the Proton donor in catalysis. Residues 300-302 (GGD), Ile305, 330-331 (TA), Met382, and Ala411 each bind S-adenosyl-L-methionine.

This sequence in the N-terminal section; belongs to the precorrin-2 dehydrogenase / sirohydrochlorin ferrochelatase family. In the C-terminal section; belongs to the precorrin methyltransferase family.

The catalysed reaction is uroporphyrinogen III + 2 S-adenosyl-L-methionine = precorrin-2 + 2 S-adenosyl-L-homocysteine + H(+). It catalyses the reaction precorrin-2 + NAD(+) = sirohydrochlorin + NADH + 2 H(+). The enzyme catalyses siroheme + 2 H(+) = sirohydrochlorin + Fe(2+). Its pathway is cofactor biosynthesis; adenosylcobalamin biosynthesis; precorrin-2 from uroporphyrinogen III: step 1/1. It functions in the pathway cofactor biosynthesis; adenosylcobalamin biosynthesis; sirohydrochlorin from precorrin-2: step 1/1. It participates in porphyrin-containing compound metabolism; siroheme biosynthesis; precorrin-2 from uroporphyrinogen III: step 1/1. The protein operates within porphyrin-containing compound metabolism; siroheme biosynthesis; siroheme from sirohydrochlorin: step 1/1. Its pathway is porphyrin-containing compound metabolism; siroheme biosynthesis; sirohydrochlorin from precorrin-2: step 1/1. Functionally, multifunctional enzyme that catalyzes the SAM-dependent methylations of uroporphyrinogen III at position C-2 and C-7 to form precorrin-2 via precorrin-1. Then it catalyzes the NAD-dependent ring dehydrogenation of precorrin-2 to yield sirohydrochlorin. Finally, it catalyzes the ferrochelation of sirohydrochlorin to yield siroheme. This Zymomonas mobilis subsp. mobilis (strain ATCC 31821 / ZM4 / CP4) protein is Siroheme synthase.